The chain runs to 292 residues: NAD kinase (292 aa).

Asp-73 (proton acceptor) is an active-site residue. Residues 73-74 (DG), 147-148 (NE), His-158, Arg-175, Asp-177, 188-193 (TAYSLS), and Gln-247 each bind NAD(+).

This sequence belongs to the NAD kinase family. It depends on a divalent metal cation as a cofactor.

The protein localises to the cytoplasm. It catalyses the reaction NAD(+) + ATP = ADP + NADP(+) + H(+). Functionally, involved in the regulation of the intracellular balance of NAD and NADP, and is a key enzyme in the biosynthesis of NADP. Catalyzes specifically the phosphorylation on 2'-hydroxyl of the adenosine moiety of NAD to yield NADP. This is NAD kinase from Salmonella agona (strain SL483).